The primary structure comprises 55 residues: Spermatid nuclear transition protein 1 (55 aa).

Residues 1 to 42 (MSTSRKLKSHGMRRSKSRSPHKGVKRGGSKRKYRKGNLKSRK) are compositionally biased toward basic residues. The segment at 1 to 55 (MSTSRKLKSHGMRRSKSRSPHKGVKRGGSKRKYRKGNLKSRKRGDDANRNYRSHL) is disordered. A phosphoserine mark is found at serine 9 and serine 40.

Belongs to the nuclear transition protein 1 family. As to expression, expressed by spermatids (at protein level).

It is found in the nucleus. The protein resides in the chromosome. Functionally, plays a key role in the replacement of histones to protamine in the elongating spermatids of mammals. In condensing spermatids, loaded onto the nucleosomes, where it promotes the recruitment and processing of protamines, which are responsible for histone eviction. The polypeptide is Spermatid nuclear transition protein 1 (TNP1) (Homo sapiens (Human)).